Here is an 892-residue protein sequence, read N- to C-terminus: Chromodomain-helicase-DNA-binding protein 3 (892 aa).

A compositionally biased stretch (basic and acidic residues) spans M1–D20. A disordered region spans residues M1–K29. The segment at E35–L82 adopts a PHD-type zinc-finger fold. Chromo domains are found at residues G84–E156 and L179–R240. Residues R279–G458 form the Helicase ATP-binding domain. D292–T299 is a binding site for ATP. Residues D409 to H412 carry the DEAH box motif. The 150-residue stretch at L590–M739 folds into the Helicase C-terminal domain. The interval S839–M892 is disordered. Residues Y874 to M892 are compositionally biased toward polar residues.

This sequence belongs to the SNF2/RAD54 helicase family. As to quaternary structure, monomer.

The protein resides in the nucleus. It localises to the chromosome. The enzyme catalyses ATP + H2O = ADP + phosphate + H(+). ATPase activity is stimulated by binding to DNA or nucleosomes, but is strongly activated by nucleosomes. Functionally, ATP-dependent chromatin-remodeling factor which acts in nucleosome-remodeling by catalyzing ATP-dependent nucleosome mobilization. Likely to be involved in the regulation of transcription. The sequence is that of Chromodomain-helicase-DNA-binding protein 3 from Drosophila melanogaster (Fruit fly).